The chain runs to 234 residues: Demethylmenaquinone methyltransferase (234 aa).

Residues Thr-58, Asp-79, and 106–107 (NA) each bind S-adenosyl-L-methionine.

It belongs to the class I-like SAM-binding methyltransferase superfamily. MenG/UbiE family.

The catalysed reaction is a 2-demethylmenaquinol + S-adenosyl-L-methionine = a menaquinol + S-adenosyl-L-homocysteine + H(+). It participates in quinol/quinone metabolism; menaquinone biosynthesis; menaquinol from 1,4-dihydroxy-2-naphthoate: step 2/2. Methyltransferase required for the conversion of demethylmenaquinol (DMKH2) to menaquinol (MKH2). This chain is Demethylmenaquinone methyltransferase, found in Geobacillus sp. (strain WCH70).